We begin with the raw amino-acid sequence, 118 residues long: Basic phospholipase A2 homolog 1 (118 aa).

Cystine bridges form between Cys11-Cys71, Cys27-Cys117, Cys29-Cys45, Cys44-Cys98, Cys51-Cys91, Cys60-Cys84, and Cys78-Cys89. Positions 106–118 (NKNFNIDTKKRCK) are important for membrane-damaging activities in eukaryotes and bacteria; heparin-binding.

This sequence belongs to the phospholipase A2 family. Group I subfamily. D49 sub-subfamily. In terms of tissue distribution, expressed by the venom gland.

The protein resides in the secreted. The sequence is that of Basic phospholipase A2 homolog 1 from Laticauda colubrina (Yellow-lipped sea krait).